Here is a 711-residue protein sequence, read N- to C-terminus: F-box only protein 34 (711 aa).

4 disordered regions span residues 1–36 (MHLK…VNDE), 249–271 (SESY…EVGE), 337–372 (DTQV…ASQD), and 494–529 (YSQL…GSAE). Positions 10 to 23 (QKKEHPPEVSRETQ) are enriched in basic and acidic residues. A compositionally biased stretch (basic and acidic residues) spans 354–364 (RADRCSPKEDQ). The 53-residue stretch at 572 to 624 (QQYMAFLPHHIMVKIFRLLPTKSLVALKCTCCYFKFIIEYYNIRPADSRWVRD) folds into the F-box domain.

As to quaternary structure, directly interacts with SKP1 and CUL1.

In terms of biological role, substrate-recognition component of the SCF (SKP1-CUL1-F-box protein)-type E3 ubiquitin ligase complex. This is F-box only protein 34 (FBXO34) from Homo sapiens (Human).